The chain runs to 420 residues: Amino acid decarboxylase lolD1 (420 aa).

N6-(pyridoxal phosphate)lysine is present on lysine 62. Residues serine 194, glycine 231, and 266–269 (EPGT) each bind pyridoxal 5'-phosphate. Residue 315-316 (IV) coordinates substrate. Catalysis depends on cysteine 351, which acts as the Proton donor; shared with dimeric partner. Cysteine 351 is modified (S-nitrosocysteine). Aspartate 352 provides a ligand contact to substrate. Tyrosine 381 serves as a coordination point for pyridoxal 5'-phosphate.

This sequence belongs to the Orn/Lys/Arg decarboxylase class-II family. As to quaternary structure, homodimer. It depends on pyridoxal 5'-phosphate as a cofactor.

It participates in alkaloid biosynthesis. Functionally, amino acid decarboxylase; part of the gene cluster that mediates the biosynthesis of loline alkaloids, potent insecticidal agents composed of a pyrrolizidine ring system and an uncommon ether bridge linking carbons 2 and 7. Lolines are structurally differentiated by the various modifications of the L-amino group and include norloline, loline, N-methylloline, N-acetylloline, N-acetylnorloline, and N-formylloline. The first committed step is the condensation of O-acetyl-L-homoserine (derived from L-aspartic acid) and L-proline, probably catalyzed by the gamma-type pyridoxal 5'-phosphate(PLP)-dependent enzyme lolC, to give the diamino diacid, NACPP. Ensuing cyclization, decarboxylation, and acetylation steps yield 1-exo-acetamidopyrrolizidine (AcAP). LolO is required for installation of the ether bridge upon the pathway intermediate, 1-exo-acetamidopyrrolizidine (AcAP). In sequential 2-oxoglutarate- and O(2)-consuming steps, lolO removes hydrogens from C2 and C7 of AcAP to form both carbon-oxygen bonds in N-acetylnorloline (NANL), the precursor to all other lolines. The enzymes lolD, lolE, lolF and lolT have also been proposed to be involved in the ether-bridge installation. Further processing of the exocyclic moiety of NANL by fungal N-acetamidase (LolN), methyltransferase (LolM), and cytochrome P450 (LolP) enzymes, with occasional involvement of a plant acetyltransferase, generates the other known lolines. LolN transforms NANL to norlonine which is monomethylated and dimethylated to respectively lonine and N-methyllonine (NML) by lolM. LolP catalyzes hydroxylation of the methyl group in N-methylloline (NML) and further oxygenation to N-formylloline (NFL). A plant acetyltransferase is responsible for the acetylation of loline to form N-acetylloline (NAL). LolA might interact with aspartate kinase to prevent feedback inhibition of its activity by these end products and thereby promote production of L-homoserine from L-aspartate. The protein is Amino acid decarboxylase lolD1 of Epichloe uncinata (Endophyte fungus).